The primary structure comprises 149 residues: 3-hydroxyacyl-[acyl-carrier-protein] dehydratase FabZ (149 aa).

His-49 is an active-site residue.

Belongs to the thioester dehydratase family. FabZ subfamily.

It is found in the cytoplasm. It carries out the reaction a (3R)-hydroxyacyl-[ACP] = a (2E)-enoyl-[ACP] + H2O. Involved in unsaturated fatty acids biosynthesis. Catalyzes the dehydration of short chain beta-hydroxyacyl-ACPs and long chain saturated and unsaturated beta-hydroxyacyl-ACPs. This chain is 3-hydroxyacyl-[acyl-carrier-protein] dehydratase FabZ, found in Sulfurovum sp. (strain NBC37-1).